A 126-amino-acid chain; its full sequence is Glycine cleavage system H protein (126 aa).

Residues 24–105 form the Lipoyl-binding domain; that stretch reads TLTVGITDHA…AYGVWLFKIK (82 aa). Lysine 65 carries the post-translational modification N6-lipoyllysine.

Belongs to the GcvH family. The glycine cleavage system is composed of four proteins: P, T, L and H. It depends on (R)-lipoate as a cofactor.

The glycine cleavage system catalyzes the degradation of glycine. The H protein shuttles the methylamine group of glycine from the P protein to the T protein. The sequence is that of Glycine cleavage system H protein from Burkholderia cenocepacia (strain ATCC BAA-245 / DSM 16553 / LMG 16656 / NCTC 13227 / J2315 / CF5610) (Burkholderia cepacia (strain J2315)).